A 306-amino-acid polypeptide reads, in one-letter code: Glutaminase (306 aa).

Residues S64, N115, E159, N166, Y190, Y242, and V260 each coordinate substrate.

The protein belongs to the glutaminase family. As to quaternary structure, homotetramer.

It catalyses the reaction L-glutamine + H2O = L-glutamate + NH4(+). This is Glutaminase from Aeromonas hydrophila subsp. hydrophila (strain ATCC 7966 / DSM 30187 / BCRC 13018 / CCUG 14551 / JCM 1027 / KCTC 2358 / NCIMB 9240 / NCTC 8049).